Here is a 284-residue protein sequence, read N- to C-terminus: Tryptophan 2,3-dioxygenase (284 aa).

Substrate-binding positions include 51–55 (FIIQH), Y113, and R117. H240 provides a ligand contact to heme. Residue T254 participates in substrate binding.

Belongs to the tryptophan 2,3-dioxygenase family. As to quaternary structure, homotetramer. The cofactor is heme.

It catalyses the reaction L-tryptophan + O2 = N-formyl-L-kynurenine. It participates in amino-acid degradation; L-tryptophan degradation via kynurenine pathway; L-kynurenine from L-tryptophan: step 1/2. In terms of biological role, heme-dependent dioxygenase that catalyzes the oxidative cleavage of the L-tryptophan (L-Trp) pyrrole ring and converts L-tryptophan to N-formyl-L-kynurenine. Catalyzes the oxidative cleavage of the indole moiety. The chain is Tryptophan 2,3-dioxygenase from Arthrobacter sp. (strain FB24).